Here is a 32-residue protein sequence, read N- to C-terminus: Dermatoxin-J2 (32 aa).

The residue at position 32 (Gln-32) is a Glutamine amide.

As to expression, expressed by the skin glands.

It is found in the secreted. In terms of biological role, antimicrobial peptide. The sequence is that of Dermatoxin-J2 from Phasmahyla jandaia (Jandaia leaf frog).